Reading from the N-terminus, the 314-residue chain is MKQYLDLEKYVLENGTQKGDRTGTGTISTFGYQMRFDLQEGFPIMTTKRVPFKLVVSELLWFLHGDTNIRYLLQHNNNIWNEWAFERFVKSDDYKGEDMTDFGLRAERDPAFKEVYQAEMEKFKTRIIEDEAFATKYGELGNIYGKQWREWKTSQGETIDQLADLIEMIKTNPNSRRLIVSAWNPEDIPNMALPPCHSLFQFYVADGKLSCQLYQRSADIFLGVPFNIASYALLTHLIAREVGLDVGEFIHTMGDAHLYNNHIEQVKEQLSRTPHALPKLVLSDKPATIFDFEVADISLDGYNPDPSIKAPISV.

DUMP-binding positions include arginine 21 and 176-177 (RR). Cysteine 196 acts as the Nucleophile in catalysis. Residues 216–219 (RSAD), asparagine 227, and 257–259 (HLY) contribute to the dUMP site. Aspartate 219 is a (6R)-5,10-methylene-5,6,7,8-tetrahydrofolate binding site. A (6R)-5,10-methylene-5,6,7,8-tetrahydrofolate-binding site is contributed by serine 313.

This sequence belongs to the thymidylate synthase family. Bacterial-type ThyA subfamily. As to quaternary structure, homodimer.

Its subcellular location is the cytoplasm. It catalyses the reaction dUMP + (6R)-5,10-methylene-5,6,7,8-tetrahydrofolate = 7,8-dihydrofolate + dTMP. Its pathway is pyrimidine metabolism; dTTP biosynthesis. Functionally, catalyzes the reductive methylation of 2'-deoxyuridine-5'-monophosphate (dUMP) to 2'-deoxythymidine-5'-monophosphate (dTMP) while utilizing 5,10-methylenetetrahydrofolate (mTHF) as the methyl donor and reductant in the reaction, yielding dihydrofolate (DHF) as a by-product. This enzymatic reaction provides an intracellular de novo source of dTMP, an essential precursor for DNA biosynthesis. This is Thymidylate synthase from Listeria monocytogenes serovar 1/2a (strain ATCC BAA-679 / EGD-e).